A 728-amino-acid chain; its full sequence is 1,4-alpha-glucan branching enzyme GlgB (728 aa).

Catalysis depends on Asp-405, which acts as the Nucleophile. Glu-458 acts as the Proton donor in catalysis. The segment at 686–712 (YHGSNAGNAGAVQSDEHESHGRPHSLS) is disordered.

Belongs to the glycosyl hydrolase 13 family. GlgB subfamily. In terms of assembly, monomer.

The enzyme catalyses Transfers a segment of a (1-&gt;4)-alpha-D-glucan chain to a primary hydroxy group in a similar glucan chain.. The protein operates within glycan biosynthesis; glycogen biosynthesis. Its function is as follows. Catalyzes the formation of the alpha-1,6-glucosidic linkages in glycogen by scission of a 1,4-alpha-linked oligosaccharide from growing alpha-1,4-glucan chains and the subsequent attachment of the oligosaccharide to the alpha-1,6 position. In Enterobacter sp. (strain 638), this protein is 1,4-alpha-glucan branching enzyme GlgB.